We begin with the raw amino-acid sequence, 348 residues long: MIFNSLSIKRLSSTXTSLPFKKHAKLNFDLYSPQHSTYGKLPYHCQEPIIFLHGIYGYSKSFNSDYQQLSNLLHTPIYSVDMRCHGETENCLPFTYDALAGDLDNFVITHNIKKPSLIGFSLGAKLAMLAILKSPHLYTSGVIVDNVPLKQPRIKPNLTAFGNALRDSVFKSGVKRNDPSWISKSFNVMKDVCSDMPANFYLLHNIQPKPSYLKKYSTEESENSLFCKVPIRELSSHVVENVPDWPEEDLAGVKTDVPILVVKASTSGFVNEDGVAALXKHFSDFTIVEVAGTHLVMKERPQEYISAVGRWFYQQNCKKAAALTKAKKTNDQKITQQPILSYKKIEIA.

The N-terminal 19 residues, 1–19, are a transit peptide targeting the mitochondrion; that stretch reads MIFNSLSIKRLSSTXTSLP. Positions 49 to 305 constitute an AB hydrolase-1 domain; it reads IIFLHGIYGY…VMKERPQEYI (257 aa). Residues Ser121, Asp145, and His294 each act as charge relay system in the active site.

The protein belongs to the AB hydrolase superfamily.

The protein resides in the mitochondrion. It carries out the reaction ethanol + acetyl-CoA = ethyl acetate + CoA. The catalysed reaction is acetyl-CoA + H2O = acetate + CoA + H(+). The enzyme catalyses ethyl acetate + H2O = ethanol + acetate + H(+). Functionally, alcohol acetyltransferase that catalyzes the synthesis of ethyl acetate from ethanol and acetyl-CoA. Can also function as a thioesterase by hydrolyzing acetyl-CoA in the absence of ethanol, as well as esterase hydrolyzing ethyl acetate. The polypeptide is Ethanol acetyltransferase 2 (EAT2) (Hanseniaspora uvarum (Yeast)).